The chain runs to 149 residues: Transcriptional repressor NrdR (149 aa).

The segment at 3–34 (CPFCFAVDTKVIDSRLVGEGSSVRRRRQCLVC) is a zinc-finger region. An ATP-cone domain is found at 49 to 139 (PRVVKSNDVR…VYRSFEDIKE (91 aa)).

The protein belongs to the NrdR family. The cofactor is Zn(2+).

Negatively regulates transcription of bacterial ribonucleotide reductase nrd genes and operons by binding to NrdR-boxes. The chain is Transcriptional repressor NrdR from Klebsiella pneumoniae (strain 342).